Consider the following 92-residue polypeptide: Small ribosomal subunit protein uS19 (92 aa).

Belongs to the universal ribosomal protein uS19 family.

Protein S19 forms a complex with S13 that binds strongly to the 16S ribosomal RNA. The protein is Small ribosomal subunit protein uS19 of Borrelia recurrentis (strain A1).